Consider the following 708-residue polypeptide: MKDMPLQIHVLLGLAITTLVQAVDKKVDCPQLCTCEIRPWFTPTSIYMEASTVDCNDLGLLTFPARLPANTQILLLQTNDIAKIEYSTDFPVNLTGLDLSQNNLSSVTNINVKKMPQLLSVYLEENKLTELPEKCLSELSNLQELYINHNLLSTISPGAFIGLHNLLRLHLNSNRLQMINSKWFDALPNLEILMIGENPIIRIKDMNFKPLINLRSLVIAGINLTEIPDNALVGLENLESISFYDNRLIKVPHAALQKVVNLKFLDLNKNPINRIRRGDFSNMLHLKELGINNMPELISIDSLAVDNLPDLRKIEATNNPRLSYIHPNAFFRLPKLESLMLNSNALSALYHGTIESLPNLKEISIHSNPIRCDCVIRWINMNKTNIRFMEPDSLFCVDPPEFQGQNVRQVHFRDMMEICLPLIAPESFPSNLNVEAGSYVSFHCRATAEPQPEIYWITPSGQKLLPNTLTDKFYVHSEGTLDINGVTPKEGGLYTCIATNLVGADLKSVMIKVDGSFPQDNNGSLNIKIRDIQANSVLVSWKASSKILKSSVKWTAFVKTENSHAAQSARIPSDIKVYNLTHLNPSTEYKICIDIPTIYQKNRKKCVNVTTKGLDPDQKEYEKSNTTTLMACLGGLLGIIGVICLISCLSPEMNCDGGHSYVRNYLQKPTFALGELYPPLINLWEAGKEKSTSLKVKATVIGLPTNMS.

The N-terminal stretch at 1–22 (MKDMPLQIHVLLGLAITTLVQA) is a signal peptide. One can recognise an LRRNT domain in the interval 23 to 69 (VDKKVDCPQLCTCEIRPWFTPTSIYMEASTVDCNDLGLLTFPARLPA). The Extracellular portion of the chain corresponds to 23 to 628 (VDKKVDCPQL…KEYEKSNTTT (606 aa)). LRR repeat units lie at residues 70–91 (NTQILLLQTNDIAKIEYSTDFP), 93–114 (NLTGLDLSQNNLSSVTNINVKK), 117–138 (QLLSVYLEENKLTELPEKCLSE), 141–162 (NLQELYINHNLLSTISPGAFIG), 165–186 (NLLRLHLNSNRLQMINSKWFDA), 189–210 (NLEILMIGENPIIRIKDMNFKP), 213–234 (NLRSLVIAGINLTEIPDNALVG), 237–258 (NLESISFYDNRLIKVPHAALQK), 261–282 (NLKFLDLNKNPINRIRRGDFSN), 285–304 (HLKELGINNMPELISIDSLA), 310–332 (DLRKIEATNNPRLSYIHPNAFFR), and 335–358 (KLESLMLNSNALSALYHGTIESLP). 2 N-linked (GlcNAc...) asparagine glycosylation sites follow: Asn93 and Asn103. Asn223 carries N-linked (GlcNAc...) asparagine glycosylation. Positions 368–421 (NPIRCDCVIRWINMNKTNIRFMEPDSLFCVDPPEFQGQNVRQVHFRDMMEICLP) constitute an LRRCT domain. Residue Asn382 is glycosylated (N-linked (GlcNAc...) asparagine). The Ig-like C2-type domain maps to 421-514 (PLIAPESFPS…DLKSVMIKVD (94 aa)). Cys444 and Cys496 are joined by a disulfide. Asn522, Asn579, Asn608, and Asn625 each carry an N-linked (GlcNAc...) asparagine glycan. Residues 523-617 (GSLNIKIRDI…NVTTKGLDPD (95 aa)) form the Fibronectin type-III domain. Residues 629–649 (LMACLGGLLGIIGVICLISCL) traverse the membrane as a helical segment. Topologically, residues 650–708 (SPEMNCDGGHSYVRNYLQKPTFALGELYPPLINLWEAGKEKSTSLKVKATVIGLPTNMS) are cytoplasmic.

The protein localises to the membrane. In Pongo abelii (Sumatran orangutan), this protein is Leucine-rich repeat neuronal protein 3 (LRRN3).